The chain runs to 488 residues: Lysine--tRNA ligase (488 aa).

Mg(2+) contacts are provided by Glu-398 and Glu-405.

Belongs to the class-II aminoacyl-tRNA synthetase family. In terms of assembly, homodimer. The cofactor is Mg(2+).

It localises to the cytoplasm. It carries out the reaction tRNA(Lys) + L-lysine + ATP = L-lysyl-tRNA(Lys) + AMP + diphosphate. The chain is Lysine--tRNA ligase from Carboxydothermus hydrogenoformans (strain ATCC BAA-161 / DSM 6008 / Z-2901).